We begin with the raw amino-acid sequence, 170 residues long: Cathelicidin antimicrobial peptide (170 aa).

The N-terminal stretch at 1-30 (MNTQWDSPSLGRWSLVLLLLGLVMPLAIVA) is a signal peptide. Positions 31–131 (QVLSYQEAVL…DISCDKDKRK (101 aa)) are cleaved as a propeptide — cathelin-like domain (CLD). 2 cysteine pairs are disulfide-bonded: Cys86–Cys97 and Cys108–Cys125. Positions 150 to 162 (LKNIGQRIKDFFG) are active core.

This sequence belongs to the cathelicidin family. Monomer, homodimer or homotrimer (in vitro). Oligomerizes as tetra- or hexamer in solution (in vitro). In terms of processing, proteolytically cleaved by proteinase PRTN3 into antibacterial peptide LL-37. Proteolytically cleaved by cathepsin CTSG and neutrophil elastase ELANE. Post-translationally, resistant to proteolytic degradation in solution, and when bound to both zwitterionic (mimicking mammalian membranes) and negatively charged membranes (mimicking bacterial membranes). After secretion onto the skin surface, the CAMP gene product is processed by a serine protease-dependent mechanism into multiple novel antimicrobial peptides distinct from and shorter than cathelicidin LL-37. These peptides show enhanced antimicrobial action, acquiring the ability to kill skin pathogens such as S.aureus, E.coli and C.albicans. These peptides have lost the ability to stimulate CXCL8/IL8 release from keratinocytes. The peptides act synergistically, killing bacteria at lower concentrations when present together, and maintain activity at increased salt condition.

Its subcellular location is the secreted. The protein resides in the vesicle. Antimicrobial protein that is an integral component of the innate immune system. Binds to bacterial lipopolysaccharides (LPS). Acts via neutrophil N-formyl peptide receptors to enhance the release of CXCL2. Postsecretory processing generates multiple cathelicidin antimicrobial peptides with various lengths which act as a topical antimicrobial defense in sweat on skin. The unprocessed precursor form, cathelicidin antimicrobial peptide, inhibits the growth of Gram-negative E.coli and E.aerogenes with efficiencies comparable to that of the mature peptide LL-37 (in vitro). Its function is as follows. Antimicrobial peptide that is an integral component of the innate immune system. Binds to bacterial lipopolysaccharides (LPS). Causes membrane permeabilization by forming transmembrane pores (in vitro). Causes lysis of E.coli. Exhibits antimicrobial activity against Gram-negative bacteria such as P.aeruginosa, S.typhimurium, E.aerogenes, E.coli and P.syringae, Gram-positive bacteria such as L.monocytogenes, S.epidermidis, S.pyogenes and S.aureus, as well as vancomycin-resistant enterococci (in vitro). Exhibits antimicrobial activity against methicillin-resistant S.aureus, P.mirabilis, and C.albicans in low-salt media, but not in media containing 100 mM NaCl (in vitro). Forms chiral supramolecular assemblies with quinolone signal (PQS) molecules of P.aeruginosa, which may lead to interference of bacterial quorum signaling and perturbance of bacterial biofilm formation. May form supramolecular fiber-like assemblies on bacterial membranes. Induces cytokine and chemokine producation as well as TNF/TNFA and CSF2/GMCSF production in normal human keratinocytes. Exhibits hemolytic activity against red blood cells. In terms of biological role, exhibits antimicrobial activity against E.coli and B.megaterium (in vitro). This is Cathelicidin antimicrobial peptide from Ateles fusciceps (Brown-headed spider monkey).